The primary structure comprises 293 residues: Putative serine protease 42 (293 aa).

Positions 1–26 (MSSGGGSRGLLAWLLLLQPWPGQNWA) are cleaved as a signal peptide. The segment at 33–60 (LPSPLLSEEGGENPEASPAPGPEAGPPL) is disordered. Residues 80 to 293 (IVGGVDAEEG…IVSWGIGCGR (214 aa)) form the Peptidase S1 domain. A disulfide bridge links cysteine 105 with cysteine 121. The Charge relay system role is filled by histidine 120. Asparagine 141 carries N-linked (GlcNAc...) asparagine glycosylation. The Charge relay system role is filled by aspartate 166. Asparagine 177 carries N-linked (GlcNAc...) asparagine glycosylation. Cystine bridges form between cysteine 200-cysteine 273, cysteine 232-cysteine 253, and cysteine 263-cysteine 291. Catalysis depends on serine 267, which acts as the Charge relay system. N-linked (GlcNAc...) asparagine glycosylation occurs at asparagine 276.

This sequence belongs to the peptidase S1 family.

It is found in the cytoplasm. The protein localises to the cell membrane. In terms of biological role, plays a role in spermatogenesis. Involved in germ cell survival during meiosis. This chain is Putative serine protease 42, found in Homo sapiens (Human).